The chain runs to 831 residues: Probable basic-leucine zipper transcription factor P (831 aa).

Disordered regions lie at residues 1–33 (MNHR…PSII) and 54–166 (NITS…IASR). Over residues 54–85 (NITSSPSTSSSPPISTTTTTTTTTTTTATAKK) the composition is skewed to low complexity. Positions 87-96 (NSKEKKKTTN) are enriched in basic and acidic residues. Over residues 97–129 (KDNNNNNNNNNSNNQQQQQQQQQQQQQQQQQQQ) the composition is skewed to low complexity. Residues 101 to 141 (NNNNNNNSNNQQQQQQQQQQQQQQQQQQQYEEEDDDEEDEG) adopt a coiled-coil conformation. Positions 130 to 143 (YEEEDDDEEDEGGD) are enriched in acidic residues. Over residues 144 to 154 (DNTKVGKGEKM) the composition is skewed to basic and acidic residues. A bZIP domain is found at 151-214 (GEKMKARRTN…LELLKFSQEV (64 aa)). Residues 153–173 (KMKARRTNQNIASRNYRQRKK) form a basic motif region. Residues 176–183 (IKEMEDKI) are leucine-zipper. 2 stretches are compositionally biased toward low complexity: residues 469–484 (SSSS…SSTS) and 497–510 (SSSN…SASS). 4 disordered regions span residues 469–510 (SSSS…SASS), 658–697 (QQQA…HQNY), 715–771 (DATN…NTNK), and 787–810 (SLFS…QNDS). Residues 601 to 664 (AQQHAQQQAQ…QAAQQQAAQQ (64 aa)) are a coiled coil. Composition is skewed to low complexity over residues 674-695 (PPQH…QQHQ), 720-750 (NNNN…NNNN), and 787-800 (SLFS…NSQS).

This sequence belongs to the bZIP family.

The protein localises to the nucleus. Its function is as follows. Probable transcriptional regulator. This is Probable basic-leucine zipper transcription factor P (bzpP) from Dictyostelium discoideum (Social amoeba).